A 432-amino-acid polypeptide reads, in one-letter code: Trigger factor (432 aa).

A PPIase FKBP-type domain is found at 161-246 (EDRVTIDFTG…LKKVEERELP (86 aa)).

It belongs to the FKBP-type PPIase family. Tig subfamily. As to quaternary structure, homodimer and monomer. In vivo most of the ribosomes are in complex with monomeric TF. Uncomplexed TF, however, is in a monomer-dimer equilibrium with approximately two thirds of TF existing in a dimeric state.

It is found in the cytoplasm. It catalyses the reaction [protein]-peptidylproline (omega=180) = [protein]-peptidylproline (omega=0). Its function is as follows. Involved in protein export. Acts as a chaperone by maintaining the newly synthesized protein in an open conformation. Functions as a peptidyl-prolyl cis-trans isomerase. In Shigella dysenteriae serotype 1 (strain Sd197), this protein is Trigger factor.